The sequence spans 86 residues: Neurotoxin LmNaTx34.1 (86 aa).

The signal sequence occupies residues 1–18 (MKTVILVVIALMVIEVQG). The 67-residue stretch at 19–85 (DGYLMVRAGI…IWTYEKNTCS (67 aa)) folds into the LCN-type CS-alpha/beta domain. Cystine bridges form between Cys-32–Cys-84, Cys-36–Cys-57, Cys-43–Cys-64, and Cys-47–Cys-66.

Belongs to the long (4 C-C) scorpion toxin superfamily. Sodium channel inhibitor family. Beta subfamily. In terms of tissue distribution, expressed by the venom gland.

The protein localises to the secreted. In terms of biological role, binds voltage-independently at site-4 of sodium channels (Nav) and shift the voltage of activation toward more negative potentials thereby affecting sodium channel activation and promoting spontaneous and repetitive firing. The protein is Neurotoxin LmNaTx34.1 of Lychas mucronatus (Chinese swimming scorpion).